The primary structure comprises 215 residues: Cytochrome c biogenesis ATP-binding export protein CcmA (215 aa).

In terms of domain architecture, ABC transporter spans 3 to 215 (LEAENLAGER…MAAFSVEDIA (213 aa)). 35–42 (GPNGSGKS) lines the ATP pocket.

This sequence belongs to the ABC transporter superfamily. CcmA exporter (TC 3.A.1.107) family. The complex is composed of two ATP-binding proteins (CcmA) and two transmembrane proteins (CcmB).

The protein resides in the cell inner membrane. It catalyses the reaction heme b(in) + ATP + H2O = heme b(out) + ADP + phosphate + H(+). Its function is as follows. Part of the ABC transporter complex CcmAB involved in the biogenesis of c-type cytochromes; once thought to export heme, this seems not to be the case, but its exact role is uncertain. Responsible for energy coupling to the transport system. The protein is Cytochrome c biogenesis ATP-binding export protein CcmA of Brucella abortus (strain 2308).